The primary structure comprises 106 residues: UPF0145 protein PSEEN3024 (106 aa).

It belongs to the UPF0145 family.

This chain is UPF0145 protein PSEEN3024, found in Pseudomonas entomophila (strain L48).